We begin with the raw amino-acid sequence, 449 residues long: MEFRYLPMTNQDKQEMLDAIGIKSTEELFSDIPEHVRFKGEMNLKAPISEYELTKELTELASRNIHTKEYTSFLGAGVYDHYIPSVVDHVISRSEFYTAYTPYQPEISQGELQAIFEFQTMISELTGLPVANSSMYDGGTALAEAVNLSAAHTKRKKVLVSKAVHPEYRAVIDSYTRGQSIDIVEIDTVNGVTDLAQLDQAIDETIAGVVVQYPNFFGQLEPMKKIEQLLENHQKTMLIVSSNPLALGYLTPPGEFGADIVTGDTQVFGIPAQFGGPHCGYFATSKKLMRKVPGRLVGETVDEEGTRGYVLTLQAREQHIRRDKATSNICSNQALNALASSVAMSSIGKHGLRKLASVNMQKARYARKKLLEAGVELAFDGSFFNEFVIKVPGSVSKINKQLLDKGIIAGYDLAKDDKSLEGYMLIAVTEVRTKQEIDQFVKELGDIHV.

The protein belongs to the GcvP family. N-terminal subunit subfamily. As to quaternary structure, the glycine cleavage system is composed of four proteins: P, T, L and H. In this organism, the P 'protein' is a heterodimer of two subunits.

The catalysed reaction is N(6)-[(R)-lipoyl]-L-lysyl-[glycine-cleavage complex H protein] + glycine + H(+) = N(6)-[(R)-S(8)-aminomethyldihydrolipoyl]-L-lysyl-[glycine-cleavage complex H protein] + CO2. The glycine cleavage system catalyzes the degradation of glycine. The P protein binds the alpha-amino group of glycine through its pyridoxal phosphate cofactor; CO(2) is released and the remaining methylamine moiety is then transferred to the lipoamide cofactor of the H protein. The sequence is that of Probable glycine dehydrogenase (decarboxylating) subunit 1 from Oceanobacillus iheyensis (strain DSM 14371 / CIP 107618 / JCM 11309 / KCTC 3954 / HTE831).